A 327-amino-acid polypeptide reads, in one-letter code: UPF0665 family protein C23C4.06c (327 aa).

This sequence belongs to the UPF0665 family.

The protein localises to the cytoplasm. Its subcellular location is the nucleus. The protein is UPF0665 family protein C23C4.06c of Schizosaccharomyces pombe (strain 972 / ATCC 24843) (Fission yeast).